Reading from the N-terminus, the 975-residue chain is E3 ubiquitin-protein ligase NEDD4-like (975 aa).

Residue Ala2 is modified to N-acetylalanine. Residues Gly4–Tyr126 enclose the C2 domain. 3 disordered regions span residues Asp178–Lys202, Ala244–Pro272, and Asp285–Ser312. The WW 1 domain maps to Pro193 to Leu226. A Phosphoserine modification is found at Ser312. Phosphothreonine is present on Thr318. Position 342 is a phosphoserine; by WNK1 and WNK4 (Ser342). 2 disordered regions span residues Glu349 to Glu393 and Gly424 to Gln496. Thr367 carries the phosphothreonine; by SGK1 modification. The WW 2 domain maps to Pro385–Met418. Ser446 bears the Phosphoserine mark. Phosphoserine; by PKA and SGK1 is present on Ser448. Position 449 is a phosphoserine; by WNK1 and WNK4 (Ser449). Residues Gly460–Lys471 are compositionally biased toward basic and acidic residues. Phosphoserine is present on residues Ser464, Ser475, Ser479, Ser483, and Ser487. 2 WW domains span residues Ser497 to Leu530 and Gly548 to Leu581. Positions Arg640–Val974 constitute an HECT domain. Cys942 acts as the Glycyl thioester intermediate in catalysis.

As to quaternary structure, interacts with UBE2E3. Interacts with NDFIP1; this interaction activates the E3 ubiquitin-protein ligase. Interacts with NDFIP2; this interaction activates the E3 ubiquitin-protein ligase. Interacts (via WW domains) with SCN1A. Interacts (via WW domains) with SCN2A. Interacts (via WW domains) with SCN3A. Interacts (via WW domains) with SCN5A. Interacts (via WW domains) with SCN8A. Interacts (via WW domains) with SCN9A. Interacts (via WW domains) with SCN10A. Interacts (via WW domains) with CLCN5. Interacts with SMAD2. Interacts with SMAD3. Interacts with SMAD6. Interacts with SMAD7. The phosphorylated form interacts with 14-3-3 proteins. Interacts with TNK2. Interacts with WNK1. Interacts with SGK1. Interacts (via C2 domain) with NPC2. Interacts with ARRDC4. Interacts with KCNQ1; promotes internalization of KCNQ1. Interacts (via domains WW1, 3 and 4) with USP36; the interaction inhibits ubiquitination of, at least, NTRK1, KCNQ2 and KCNQ3 by NEDD4L. Interacts with PRRG4 (via cytoplasmic domain). Interacts with LDLRAD3; the interaction is direct. Interacts with UBE2D2. Interacts with TTYH2 and TTYH3. (Microbial infection) Interacts with Epstein-Barr virus LMP2A. Phosphorylated by SGK1 or PKA; which impairs interaction with SCNN. Interaction with YWHAH inhibits dephosphorylation. Post-translationally, auto-ubiquitinated. Deubiquitinated by USP36, no effect on NEDD4L protein levels. Both proteins interact and regulate each other's ubiquitination levels. In terms of tissue distribution, ubiquitously expressed, with highest levels in prostate, pancreas, and kidney. Expressed in melanocytes.

It is found in the cytoplasm. The protein resides in the golgi apparatus. The protein localises to the endosome. It localises to the multivesicular body. The catalysed reaction is S-ubiquitinyl-[E2 ubiquitin-conjugating enzyme]-L-cysteine + [acceptor protein]-L-lysine = [E2 ubiquitin-conjugating enzyme]-L-cysteine + N(6)-ubiquitinyl-[acceptor protein]-L-lysine.. The enzyme catalyses [E2 ubiquitin-conjugating enzyme]-S-ubiquitinyl-L-cysteine + [acceptor protein]-L-cysteine = [E2 ubiquitin-conjugating enzyme]-L-cysteine + [acceptor protein]-S-ubiquitinyl-L-cysteine.. Its pathway is protein modification; protein ubiquitination. With respect to regulation, activated by NDFIP1- and NDFIP2-binding. Its function is as follows. E3 ubiquitin-protein ligase that mediates the polyubiquitination of lysine and cysteine residues on target proteins and is thereby implicated in the regulation of various signaling pathways including autophagy, innate immunity or DNA repair. Inhibits TGF-beta signaling by triggering SMAD2 and TGFBR1 ubiquitination and proteasome-dependent degradation. Downregulates autophagy and cell growth by ubiquitinating and reducing cellular ULK1 or ASCT2 levels. Promotes ubiquitination and internalization of various plasma membrane channels such as ENaC, SCN2A/Nav1.2, SCN3A/Nav1.3, SCN5A/Nav1.5, SCN9A/Nav1.7, SCN10A/Nav1.8, KCNA3/Kv1.3, KCNH2, EAAT1, KCNQ2/Kv7.2, KCNQ3/Kv7.3 or CLC5. Promotes ubiquitination and degradation of SGK1 and TNK2. Ubiquitinates BRAT1 and this ubiquitination is enhanced in the presence of NDFIP1. Plays a role in dendrite formation by melanocytes. Involved in the regulation of TOR signaling. Ubiquitinates and regulates protein levels of NTRK1 once this one is activated by NGF. Plays a role in antiviral innate immunity by catalyzing 'Lys-29'-linked cysteine ubiquitination of TRAF3, resulting in enhanced 'Lys-48' and 'Lys-63'-linked ubiquitination of TRAF3. Ubiquitinates TTYH2 and TTYH3 and regulates protein levels of TTYH2. This chain is E3 ubiquitin-protein ligase NEDD4-like, found in Homo sapiens (Human).